The sequence spans 447 residues: Phosphoglucosamine mutase (447 aa).

The active-site Phosphoserine intermediate is the Ser-104. Ser-104, Asp-243, Asp-245, and Asp-247 together coordinate Mg(2+). Phosphoserine is present on Ser-104.

It belongs to the phosphohexose mutase family. The cofactor is Mg(2+). Post-translationally, activated by phosphorylation.

The catalysed reaction is alpha-D-glucosamine 1-phosphate = D-glucosamine 6-phosphate. In terms of biological role, catalyzes the conversion of glucosamine-6-phosphate to glucosamine-1-phosphate. This is Phosphoglucosamine mutase from Corynebacterium aurimucosum (strain ATCC 700975 / DSM 44827 / CIP 107346 / CN-1) (Corynebacterium nigricans).